The chain runs to 355 residues: UDP-N-acetylglucosamine--N-acetylmuramyl-(pentapeptide) pyrophosphoryl-undecaprenol N-acetylglucosamine transferase (355 aa).

Residues 14–16 (TGG), asparagine 126, arginine 162, serine 190, isoleucine 243, 262–267 (ALTVSE), and glutamine 287 contribute to the UDP-N-acetyl-alpha-D-glucosamine site.

It belongs to the glycosyltransferase 28 family. MurG subfamily.

It localises to the cell inner membrane. It catalyses the reaction di-trans,octa-cis-undecaprenyl diphospho-N-acetyl-alpha-D-muramoyl-L-alanyl-D-glutamyl-meso-2,6-diaminopimeloyl-D-alanyl-D-alanine + UDP-N-acetyl-alpha-D-glucosamine = di-trans,octa-cis-undecaprenyl diphospho-[N-acetyl-alpha-D-glucosaminyl-(1-&gt;4)]-N-acetyl-alpha-D-muramoyl-L-alanyl-D-glutamyl-meso-2,6-diaminopimeloyl-D-alanyl-D-alanine + UDP + H(+). It participates in cell wall biogenesis; peptidoglycan biosynthesis. Functionally, cell wall formation. Catalyzes the transfer of a GlcNAc subunit on undecaprenyl-pyrophosphoryl-MurNAc-pentapeptide (lipid intermediate I) to form undecaprenyl-pyrophosphoryl-MurNAc-(pentapeptide)GlcNAc (lipid intermediate II). The chain is UDP-N-acetylglucosamine--N-acetylmuramyl-(pentapeptide) pyrophosphoryl-undecaprenol N-acetylglucosamine transferase from Vibrio campbellii (strain ATCC BAA-1116).